The following is a 561-amino-acid chain: DNA ligase B (561 aa).

Catalysis depends on Lys125, which acts as the N6-AMP-lysine intermediate.

This sequence belongs to the NAD-dependent DNA ligase family. LigB subfamily.

It carries out the reaction NAD(+) + (deoxyribonucleotide)n-3'-hydroxyl + 5'-phospho-(deoxyribonucleotide)m = (deoxyribonucleotide)n+m + AMP + beta-nicotinamide D-nucleotide.. In terms of biological role, catalyzes the formation of phosphodiester linkages between 5'-phosphoryl and 3'-hydroxyl groups in double-stranded DNA using NAD as a coenzyme and as the energy source for the reaction. In Salmonella enteritidis PT4 (strain P125109), this protein is DNA ligase B.